A 101-amino-acid chain; its full sequence is Apolipoprotein C-II (101 aa).

Residues 1–22 (MGTRFLLALFLVLLVLGLEVQA) form the signal peptide. Residues 66 to 74 (AVDERIRDM) form a lipid binding region. A lipoprotein lipase cofactor region spans residues 78 to 101 (STAAVTTYAGIFTDQLFSMLKGEQ).

The protein belongs to the apolipoprotein C2 family. Post-translationally, proapolipoprotein C-II is synthesized as a sialic acid containing glycoprotein which is subsequently desialylated prior to its proteolytic processing. Proapolipoprotein C-II, the major form found in plasma undergoes proteolytic cleavage of its N-terminal hexapeptide to generate apolipoprotein C-II, which occurs as the minor form in plasma.

It localises to the secreted. Component of chylomicrons, very low-density lipoproteins (VLDL), low-density lipoproteins (LDL), and high-density lipoproteins (HDL) in plasma. Plays an important role in lipoprotein metabolism as an activator of lipoprotein lipase. Both proapolipoprotein C-II and apolipoprotein C-II can activate lipoprotein lipase. This is Apolipoprotein C-II (APOC2) from Tupaia glis (Common tree shrew).